The chain runs to 887 residues: Cadherin-1 (887 aa).

Positions 1–26 are cleaved as a signal peptide; the sequence is MGRRWGSPALQRFPVLVLLLLLQVCG. A propeptide spanning residues 27–160 is cleaved from the precursor; that stretch reads RRCDEAAPCQ…DPGFLRRQKR (134 aa). 5 consecutive Cadherin domains span residues 161–268, 269–381, 382–493, 494–599, and 600–704; these read DWVI…KPVF, IKEV…IPIF, NPTM…PPVF, VPPI…DNGP, and TPEP…RRSY. Residues 161–714 are Extracellular-facing; sequence DWVIPPISCL…IVGGLGVPAI (554 aa). Residue D263 participates in Ca(2+) binding. The N-linked (GlcNAc...) asparagine glycan is linked to N291. D294 lines the Ca(2+) pocket. N-linked (GlcNAc...) asparagine glycosylation occurs at N346. N-linked (GlcNAc...) asparagine glycans are attached at residues N564 and N643. Residues 715–735 form a helical membrane-spanning segment; sequence LGILGGILALLILLLLLLLFA. The Cytoplasmic portion of the chain corresponds to 736–887; that stretch reads RRRKVEKEPL…ELYGGGEDDE (152 aa). The tract at residues 745-770 is disordered; the sequence is LLPPEDDMRDNVYNYDEEGGGEEDQD. The segment covering 759-770 has biased composition (acidic residues); it reads YDEEGGGEEDQD.

In terms of assembly, homodimer. Interacts with CTNNA2. In terms of tissue distribution, expressed in the liver.

It localises to the cell junction. The protein localises to the adherens junction. Its subcellular location is the cell membrane. The protein resides in the endosome. It is found in the golgi apparatus. It localises to the trans-Golgi network. The protein localises to the cytoplasm. Its subcellular location is the desmosome. Its function is as follows. Cadherins are calcium-dependent cell adhesion proteins. They preferentially interact with themselves in a homophilic manner in connecting cells; cadherins may thus contribute to the sorting of heterogeneous cell types. Promotes organization of radial actin fiber structure and cellular response to contractile forces, via anchoring of radial actin fibers to CDH1 junction complexes at the cell membrane. E-cadherin is a ligand for integrin alpha-E/beta-7. The sequence is that of Cadherin-1 (CDH1) from Gallus gallus (Chicken).